Reading from the N-terminus, the 637-residue chain is 1-deoxy-D-xylulose-5-phosphate synthase (637 aa).

Thiamine diphosphate contacts are provided by residues histidine 76 and 117-119; that span reads GHS. Residue aspartate 148 coordinates Mg(2+). Thiamine diphosphate is bound by residues 149-150, asparagine 177, tyrosine 294, and glutamate 381; that span reads GA. Residue asparagine 177 coordinates Mg(2+).

It belongs to the transketolase family. DXPS subfamily. Homodimer. It depends on Mg(2+) as a cofactor. Requires thiamine diphosphate as cofactor.

It catalyses the reaction D-glyceraldehyde 3-phosphate + pyruvate + H(+) = 1-deoxy-D-xylulose 5-phosphate + CO2. The protein operates within metabolic intermediate biosynthesis; 1-deoxy-D-xylulose 5-phosphate biosynthesis; 1-deoxy-D-xylulose 5-phosphate from D-glyceraldehyde 3-phosphate and pyruvate: step 1/1. In terms of biological role, catalyzes the acyloin condensation reaction between C atoms 2 and 3 of pyruvate and glyceraldehyde 3-phosphate to yield 1-deoxy-D-xylulose-5-phosphate (DXP). The chain is 1-deoxy-D-xylulose-5-phosphate synthase from Neisseria gonorrhoeae (strain NCCP11945).